The primary structure comprises 456 residues: Bifunctional protein GlmU (456 aa).

Residues 1-229 (MSNSSMSVVI…LSEVEGVNNR (229 aa)) are pyrophosphorylase. UDP-N-acetyl-alpha-D-glucosamine-binding positions include 11–14 (LAAG), lysine 25, glutamine 76, 81–82 (GT), 103–105 (YGD), glycine 140, glutamate 154, asparagine 169, and asparagine 227. A Mg(2+)-binding site is contributed by aspartate 105. Asparagine 227 serves as a coordination point for Mg(2+). The tract at residues 230–250 (LQLAALERVYQSEQAEKLLLA) is linker. An N-acetyltransferase region spans residues 251 to 456 (GVMLLDPARF…QGWQRPIKKK (206 aa)). Residues arginine 333 and lysine 351 each contribute to the UDP-N-acetyl-alpha-D-glucosamine site. Histidine 363 acts as the Proton acceptor in catalysis. Residues tyrosine 366 and asparagine 377 each contribute to the UDP-N-acetyl-alpha-D-glucosamine site. Residues alanine 380, 386 to 387 (NY), serine 405, alanine 423, and arginine 440 contribute to the acetyl-CoA site.

This sequence in the N-terminal section; belongs to the N-acetylglucosamine-1-phosphate uridyltransferase family. The protein in the C-terminal section; belongs to the transferase hexapeptide repeat family. As to quaternary structure, homotrimer. Requires Mg(2+) as cofactor.

It is found in the cytoplasm. The enzyme catalyses alpha-D-glucosamine 1-phosphate + acetyl-CoA = N-acetyl-alpha-D-glucosamine 1-phosphate + CoA + H(+). It catalyses the reaction N-acetyl-alpha-D-glucosamine 1-phosphate + UTP + H(+) = UDP-N-acetyl-alpha-D-glucosamine + diphosphate. It functions in the pathway nucleotide-sugar biosynthesis; UDP-N-acetyl-alpha-D-glucosamine biosynthesis; N-acetyl-alpha-D-glucosamine 1-phosphate from alpha-D-glucosamine 6-phosphate (route II): step 2/2. The protein operates within nucleotide-sugar biosynthesis; UDP-N-acetyl-alpha-D-glucosamine biosynthesis; UDP-N-acetyl-alpha-D-glucosamine from N-acetyl-alpha-D-glucosamine 1-phosphate: step 1/1. It participates in bacterial outer membrane biogenesis; LPS lipid A biosynthesis. Its function is as follows. Catalyzes the last two sequential reactions in the de novo biosynthetic pathway for UDP-N-acetylglucosamine (UDP-GlcNAc). The C-terminal domain catalyzes the transfer of acetyl group from acetyl coenzyme A to glucosamine-1-phosphate (GlcN-1-P) to produce N-acetylglucosamine-1-phosphate (GlcNAc-1-P), which is converted into UDP-GlcNAc by the transfer of uridine 5-monophosphate (from uridine 5-triphosphate), a reaction catalyzed by the N-terminal domain. This chain is Bifunctional protein GlmU, found in Yersinia enterocolitica serotype O:8 / biotype 1B (strain NCTC 13174 / 8081).